Here is a 421-residue protein sequence, read N- to C-terminus: General transcription factor IIH subunit 2 (421 aa).

The segment at Met-1–Trp-26 is disordered. Acidic residues predominate over residues Glu-11 to Gly-24. In terms of domain architecture, VWFA spans Tyr-83–Ile-272. An RING-type zinc finger spans residues Cys-362–Glu-408.

Belongs to the GTF2H2 family. As to quaternary structure, component of the 7-subunit TFIIH core complex composed of XPB, XPD, TFB1/GTF2H1, GTF2H2/P44, TFB4/GTF2H3, TFB2/GTF2H4 and TFB5/GTF2H5, which is active in NER. The core complex associates with the 3-subunit CDK-activating kinase (CAK) module composed of CYCH1/cyclin H1, CDKD and MAT1/At4g30820 to form the 10-subunit holoenzyme (holo-TFIIH) active in transcription. Interacts with XPD.

It is found in the nucleus. In terms of biological role, component of the general transcription and DNA repair factor IIH (TFIIH) core complex, which is involved in general and transcription-coupled nucleotide excision repair (NER) of damaged DNA and, when complexed to CAK, in RNA transcription by RNA polymerase II. In NER, TFIIH acts by opening DNA around the lesion to allow the excision of the damaged oligonucleotide and its replacement by a new DNA fragment. In transcription, TFIIH has an essential role in transcription initiation. When the pre-initiation complex (PIC) has been established, TFIIH is required for promoter opening and promoter escape. Phosphorylation of the C-terminal tail (CTD) of the largest subunit of RNA polymerase II by the kinase module CAK controls the initiation of transcription. Can restore UV resistance in the NER-deficient ssl1-1 yeast mutant. The sequence is that of General transcription factor IIH subunit 2 from Arabidopsis thaliana (Mouse-ear cress).